The following is a 232-amino-acid chain: Orotidine 5'-phosphate decarboxylase (232 aa).

Substrate is bound by residues Asp-12, Lys-34, 61–70 (DMKLLDIDNT), Thr-116, Arg-177, Gln-186, Gly-206, and Arg-207. Lys-63 (proton donor) is an active-site residue.

The protein belongs to the OMP decarboxylase family. Type 1 subfamily. In terms of assembly, homodimer.

It catalyses the reaction orotidine 5'-phosphate + H(+) = UMP + CO2. It participates in pyrimidine metabolism; UMP biosynthesis via de novo pathway; UMP from orotate: step 2/2. In terms of biological role, catalyzes the decarboxylation of orotidine 5'-monophosphate (OMP) to uridine 5'-monophosphate (UMP). The polypeptide is Orotidine 5'-phosphate decarboxylase (Sinorhizobium medicae (strain WSM419) (Ensifer medicae)).